The chain runs to 368 residues: Interferon-stimulated 20 kDa exonuclease-like 2 (368 aa).

Disordered regions lie at residues 33–107 and 127–187; these read FLEQ…APSK and PKTK…PTVP. Residues 42–54 show a composition bias toward polar residues; it reads KKNQPPNKVSKLN. Residues 77–96 show a composition bias toward basic and acidic residues; the sequence is KKKEAAASKRDSERSKDKKA. A compositionally biased stretch (basic residues) spans 131 to 145; sequence STQKKGSKKKSLKKK. The Exonuclease domain maps to 194–368; the sequence is MVAIDCEMVG…QHLAQNPPEN (175 aa).

The protein localises to the nucleus. It localises to the nucleolus. Its function is as follows. 3'-&gt; 5'-exoribonuclease involved in ribosome biogenesis in the processing of the 12S pre-rRNA. Displays a strong specificity for a 3'-end containing a free hydroxyl group. The protein is Interferon-stimulated 20 kDa exonuclease-like 2 (Isg20l2) of Mus musculus (Mouse).